Consider the following 348-residue polypeptide: Trace amine-associated receptor 9 (348 aa).

Over 1-33 (MTSDFSPEPPMELCYENVNGSCIKSSYAPWPRA) the chain is Extracellular. Asn19 carries N-linked (GlcNAc...) asparagine glycosylation. Disulfide bonds link Cys22-Cys186 and Cys105-Cys190. The helical transmembrane segment at 34–58 (ILYGVLGLGALLAVFGNLLVIIAIL) threads the bilayer. The Cytoplasmic segment spans residues 59–68 (HFKQLHTPTN). A helical transmembrane segment spans residues 69–90 (FLVASLACADFLVGVTVMPFST). At 91 to 105 (VRSVESCWYFGESYC) the chain is on the extracellular side. The helical transmembrane segment at 106-128 (KFHTCFDTSFCFASLFHLCCISI) threads the bilayer. The spermidine site is built by Asp112 and Thr113. Over 129 to 148 (DRYIAVTDPLTYPTKFTVSV) the chain is Cytoplasmic. The chain crosses the membrane as a helical span at residues 149–170 (SGLCIALSWFFSVTYSFSIFYT). Over 171 to 196 (GANEEGIEELVVALTCVGGCQAPLNQ) the chain is Extracellular. Residues 174–187 (EEGIEELVVALTCV) form an extracellular Loop 2 (ECL2) region. The chain crosses the membrane as a helical span at residues 197–218 (NWVLLCFLLFFLPTVVMVFLYG). The Cytoplasmic portion of the chain corresponds to 219–256 (RIFLVAKYQARKIEGTANQAQASSESYKERVAKRERKA). A helical transmembrane segment spans residues 257–280 (AKTLGIAMAAFLVSWLPYIIDAVI). The Extracellular portion of the chain corresponds to 281 to 293 (DAYMNFITPAYVY). A helical membrane pass occupies residues 294–314 (EILVWCVYYNSAMNPLIYAFF). The Cytoplasmic portion of the chain corresponds to 315–348 (YPWFRKAIKLIVSGKVFRADSSTTNLFSEEAGAG).

It belongs to the G-protein coupled receptor 1 family. Specifically expressed in neurons of the olfactory epithelium.

Its subcellular location is the cell membrane. Its function is as follows. Olfactory receptor specific for trace amines, such as triethylamine, N,N-dimethylcyclohexylamine (DMCHA), beta-phenylethylamine (beta-PEA), cadaverine (CAD) and polyamines such as spermine and spermidine. Trace amine compounds are enriched in animal body fluids and act on trace amine-associated receptors (TAARs) to elicit both intraspecific and interspecific innate behaviors. Trace amine-binding causes a conformation change that triggers signaling via G(s)-class of G alpha proteins (GNAL or GNAS). In mature olfactory sensory neurons, Taar9 is coupled with GNAL/G(olf)G alpha protein and mediates activation of adenylate cyclase activity to activate cAMP signaling and eventually transmit odorant signals to achieve membrane depolarization. In immature olfactory sensory neurons, Taar9 is coupled with GNAS/G(s) G alpha proteins. This chain is Trace amine-associated receptor 9, found in Mus musculus (Mouse).